The sequence spans 332 residues: Glycerol-3-phosphate dehydrogenase [NAD(P)+] (332 aa).

5 residues coordinate NADPH: Ser-10, Trp-11, His-31, Arg-32, and Lys-105. Residues Lys-105, Gly-136, and Ser-138 each contribute to the sn-glycerol 3-phosphate site. Ala-140 serves as a coordination point for NADPH. The sn-glycerol 3-phosphate site is built by Lys-191, Asp-244, Ser-254, Arg-255, and Asn-256. Lys-191 functions as the Proton acceptor in the catalytic mechanism. NADPH is bound at residue Arg-255. NADPH-binding residues include Val-279 and Glu-281.

The protein belongs to the NAD-dependent glycerol-3-phosphate dehydrogenase family.

The protein localises to the cytoplasm. It catalyses the reaction sn-glycerol 3-phosphate + NAD(+) = dihydroxyacetone phosphate + NADH + H(+). The enzyme catalyses sn-glycerol 3-phosphate + NADP(+) = dihydroxyacetone phosphate + NADPH + H(+). It functions in the pathway membrane lipid metabolism; glycerophospholipid metabolism. Functionally, catalyzes the reduction of the glycolytic intermediate dihydroxyacetone phosphate (DHAP) to sn-glycerol 3-phosphate (G3P), the key precursor for phospholipid synthesis. In Prosthecochloris aestuarii (strain DSM 271 / SK 413), this protein is Glycerol-3-phosphate dehydrogenase [NAD(P)+].